Reading from the N-terminus, the 364-residue chain is MSILNLVRADLLNSQNYVPGGESARYRSHANELPWSPVTMGEYNLNYYPNIGLQIELQKQLAKRYQINSDQIILTRGSDDGIDLTTRLFLTAGKDAFMQFPPTFPMYAFYVRLQQAELIECPLDRRTNFRLTLDQIENSWKPNCKVIMFCSPNNPTGNLVDLNLIAKTCELYTNQSIIVVDEAYIEFANAPSATSLIGEFENLIVLRTLSKAFGLAGLRLGCIIAQSPIIQAFNKIIAPYSIATPSMELAKRALNNSDWFTKTIEQIKSSRAWVIKKFADNPIIEKIYPTETNFILIQTRFSKQLATWLARYGIAVRDFPSSSLLHDHLRITVGHDEQNQLLIDALSSFNADVAGLNYEKDFIY.

An N6-(pyridoxal phosphate)lysine modification is found at K211.

This sequence belongs to the class-II pyridoxal-phosphate-dependent aminotransferase family. Histidinol-phosphate aminotransferase subfamily. As to quaternary structure, homodimer. Pyridoxal 5'-phosphate is required as a cofactor.

It catalyses the reaction L-histidinol phosphate + 2-oxoglutarate = 3-(imidazol-4-yl)-2-oxopropyl phosphate + L-glutamate. The protein operates within amino-acid biosynthesis; L-histidine biosynthesis; L-histidine from 5-phospho-alpha-D-ribose 1-diphosphate: step 7/9. This Legionella pneumophila (strain Lens) protein is Histidinol-phosphate aminotransferase 1.